The chain runs to 257 residues: Isoprenyl transferase (257 aa).

Aspartate 34 is an active-site residue. A Mg(2+)-binding site is contributed by aspartate 34. Residues 35–38 (GNGR), tryptophan 39, arginine 47, histidine 51, and 79–81 (STE) contribute to the substrate site. Residue asparagine 82 is the Proton acceptor of the active site. Residues tryptophan 83, arginine 85, arginine 202, and 208–210 (RLS) each bind substrate. Glutamate 221 provides a ligand contact to Mg(2+).

Belongs to the UPP synthase family. In terms of assembly, homodimer. Mg(2+) is required as a cofactor.

Catalyzes the condensation of isopentenyl diphosphate (IPP) with allylic pyrophosphates generating different type of terpenoids. This is Isoprenyl transferase from Geobacillus kaustophilus (strain HTA426).